Reading from the N-terminus, the 156-residue chain is MKCPKCNSTHSRVVDSRHADEVNAIRRRRECEECETRFTTFEHIEKRPLIVVKKDGTREQFLREKILNGLVRSCEKRPVRYEQLEDITNNVEWKLRDEGRAEISSREIGEHVMNLLMHVDQVSYVRFASVYKEFKDVDQLLQSMQGILAENKRSDS.

A zinc finger lies at 3-34 (CPKCNSTHSRVVDSRHADEVNAIRRRRECEEC). Residues 49 to 139 (LIVVKKDGTR…VYKEFKDVDQ (91 aa)) enclose the ATP-cone domain.

The protein belongs to the NrdR family. Requires Zn(2+) as cofactor.

In terms of biological role, negatively regulates transcription of bacterial ribonucleotide reductase nrd genes and operons by binding to NrdR-boxes. The polypeptide is Transcriptional repressor NrdR (Staphylococcus saprophyticus subsp. saprophyticus (strain ATCC 15305 / DSM 20229 / NCIMB 8711 / NCTC 7292 / S-41)).